The sequence spans 162 residues: MNLRIGQGWDVHRLVEGRPLVLGGVTIPFDKGLDGHSDADALCHAITDALFGAAALGDIGRHFPDTDLEFKGADSRVLLREAVRRVREAGFDIVNVDSTVIAQAPRLAPYVEAMRSHLAADLGLSPDRVNVKAKTSERLGHLGRGEGIAADAVCLLQSRLQE.

2 residues coordinate a divalent metal cation: D10 and H12. Residues 10–12 and 36–37 contribute to the 4-CDP-2-C-methyl-D-erythritol 2-phosphate site; these read DVH and HS. Position 44 (H44) interacts with a divalent metal cation. Residues 58 to 60, 63 to 67, and R144 contribute to the 4-CDP-2-C-methyl-D-erythritol 2-phosphate site; these read DIG and FPDTD.

The protein belongs to the IspF family. As to quaternary structure, homotrimer. A divalent metal cation serves as cofactor.

The catalysed reaction is 4-CDP-2-C-methyl-D-erythritol 2-phosphate = 2-C-methyl-D-erythritol 2,4-cyclic diphosphate + CMP. It functions in the pathway isoprenoid biosynthesis; isopentenyl diphosphate biosynthesis via DXP pathway; isopentenyl diphosphate from 1-deoxy-D-xylulose 5-phosphate: step 4/6. Involved in the biosynthesis of isopentenyl diphosphate (IPP) and dimethylallyl diphosphate (DMAPP), two major building blocks of isoprenoid compounds. Catalyzes the conversion of 4-diphosphocytidyl-2-C-methyl-D-erythritol 2-phosphate (CDP-ME2P) to 2-C-methyl-D-erythritol 2,4-cyclodiphosphate (ME-CPP) with a corresponding release of cytidine 5-monophosphate (CMP). The protein is 2-C-methyl-D-erythritol 2,4-cyclodiphosphate synthase of Laribacter hongkongensis (strain HLHK9).